The primary structure comprises 254 residues: MQVQCQQSPVLAGSATLVALGALALYVAKPSGYGKHTESLKPAATRLPARAAWFLQELPSFAVPAGILARQPLSLFGPPGTVLLGLFCLHYFHRTFVYSLLNRGRPYPAILILRGTAFCTGNGVLQGYYLIYCAEYPDGWYTDIRFSLGVFLFILGMGINIHSDYILRQLRKPGEISYRIPQGGLFTYVSGANFLGEIIEWIGYALATWSLPALAFAFFSLCFLGLRAFHHHRFYLKMFEDYPKSRKALIPFIF.

A run of 4 helical transmembrane segments spans residues 8–28, 72–92, 146–166, and 206–226; these read SPVL…LYVA, PLSL…LHYF, FSLG…SDYI, and LATW…FLGL.

This sequence belongs to the steroid 5-alpha reductase family. In terms of tissue distribution, expressed in high levels in the prostate and many other androgen-sensitive tissues.

It localises to the microsome membrane. It is found in the endoplasmic reticulum membrane. It catalyses the reaction a 3-oxo-5alpha-steroid + NADP(+) = a 3-oxo-Delta(4)-steroid + NADPH + H(+). The enzyme catalyses 17beta-hydroxy-5alpha-androstan-3-one + NADP(+) = testosterone + NADPH + H(+). It carries out the reaction 5alpha-pregnane-3,20-dione + NADP(+) = progesterone + NADPH + H(+). Functionally, converts testosterone (T) into 5-alpha-dihydrotestosterone (DHT) and progesterone or corticosterone into their corresponding 5-alpha-3-oxosteroids. It plays a central role in sexual differentiation and androgen physiology. The sequence is that of 3-oxo-5-alpha-steroid 4-dehydrogenase 2 (SRD5A2) from Homo sapiens (Human).